We begin with the raw amino-acid sequence, 321 residues long: Fe-S cluster assembly protein DRE2 (321 aa).

An N-terminal SAM-like domain region spans residues 1–131 (MERMLLLSPP…KPDFGPENIV (131 aa)). Positions 132 to 213 (PLKLGKRKPV…EETLLDGEDM (82 aa)) are linker. Residues Cys-223, Cys-234, Cys-237, and Cys-239 each contribute to the [2Fe-2S] cluster site. A fe-S binding site A region spans residues 223-239 (CRPKAGKRRRACKDCTC). Cys-284, Cys-287, Cys-295, and Cys-298 together coordinate [4Fe-4S] cluster. Short sequence motifs (cx2C motif) lie at residues 284 to 287 (CGNC) and 295 to 298 (CDGC). The tract at residues 284 to 298 (CGNCALGDAFRCDGC) is fe-S binding site B.

The protein belongs to the anamorsin family. In terms of assembly, monomer. Interacts with TAH18. Interacts with MIA40. Requires [2Fe-2S] cluster as cofactor. It depends on [4Fe-4S] cluster as a cofactor.

The protein localises to the cytoplasm. It is found in the mitochondrion intermembrane space. Its function is as follows. Component of the cytosolic iron-sulfur (Fe-S) protein assembly (CIA) machinery required for the maturation of extramitochondrial Fe-S proteins. Part of an electron transfer chain functioning in an early step of cytosolic Fe-S biogenesis, facilitating the de novo assembly of a [4Fe-4S] cluster on the scaffold complex CFD1-NBP35. Electrons are transferred to DRE2 from NADPH via the FAD- and FMN-containing protein TAH18. TAH18-DRE2 are also required for the assembly of the diferric tyrosyl radical cofactor of ribonucleotide reductase (RNR), probably by providing electrons for reduction during radical cofactor maturation in the catalytic small subunit RNR2. This Coccidioides posadasii (strain C735) (Valley fever fungus) protein is Fe-S cluster assembly protein DRE2.